Reading from the N-terminus, the 567-residue chain is Allo-aromadendrene synthase TPS4FN (567 aa).

Residues R282, D319, D323, R462, and D465 each contribute to the (2E,6E)-farnesyl diphosphate site. Mg(2+)-binding residues include D319 and D323. The DDXXD motif motif lies at 319–323; sequence DDIYD. Mg(2+) contacts are provided by D465 and E473.

This sequence belongs to the terpene synthase family. Tpsb subfamily. Requires Mg(2+) as cofactor. It depends on Mn(2+) as a cofactor.

The catalysed reaction is (2E,6E)-farnesyl diphosphate = alpha-humulene + diphosphate. It carries out the reaction (2E,6E)-farnesyl diphosphate = (+)-valencene + diphosphate. The enzyme catalyses (2E)-geranyl diphosphate = beta-myrcene + diphosphate. It catalyses the reaction (2E,6E)-farnesyl diphosphate = allo-aromadendrene + diphosphate. The catalysed reaction is (2E,6E)-farnesyl diphosphate + H2O = palustrol + diphosphate. The protein operates within secondary metabolite biosynthesis; terpenoid biosynthesis. Functionally, involved in sesquiterpene olefins biosynthesis, constituants of cannabinoids and terpenoids-rich resins. Catalyzes mainly the conversion of (2E)-farnesyl diphosphate to allo-aromadendrene, and also produces minor products such as alpha-humulene, valencene and palustrol. Can also use (2E)-geranyl diphosphate as substrate with low efficiency, producing minor amounts of myrcene. This Cannabis sativa (Hemp) protein is Allo-aromadendrene synthase TPS4FN.